We begin with the raw amino-acid sequence, 299 residues long: Acetylglutamate kinase (299 aa).

Residues 72–73, R94, and N196 each bind substrate; that span reads GG.

The protein belongs to the acetylglutamate kinase family. ArgB subfamily.

The protein resides in the cytoplasm. The enzyme catalyses N-acetyl-L-glutamate + ATP = N-acetyl-L-glutamyl 5-phosphate + ADP. It participates in amino-acid biosynthesis; L-arginine biosynthesis; N(2)-acetyl-L-ornithine from L-glutamate: step 2/4. Its function is as follows. Catalyzes the ATP-dependent phosphorylation of N-acetyl-L-glutamate. The protein is Acetylglutamate kinase of Burkholderia cenocepacia (strain HI2424).